The sequence spans 100 residues: Integration host factor subunit beta (100 aa).

Residues 81–100 (KPGKELRDRVNEDEHEEAHT) are disordered. Over residues 82 to 100 (PGKELRDRVNEDEHEEAHT) the composition is skewed to basic and acidic residues.

This sequence belongs to the bacterial histone-like protein family. In terms of assembly, heterodimer of an alpha and a beta chain.

Functionally, this protein is one of the two subunits of integration host factor, a specific DNA-binding protein that functions in genetic recombination as well as in transcriptional and translational control. In Pseudomonas putida (Arthrobacter siderocapsulatus), this protein is Integration host factor subunit beta (ihfB).